Here is a 2769-residue protein sequence, read N- to C-terminus: Thyroglobulin (2769 aa).

The N-terminal stretch at 1 to 19 is a signal peptide; the sequence is MALALWVFGLLDLICLASA. At Tyr-24 the chain carries Iodotyrosine; alternate. Tyr-24 carries the sulfotyrosine; alternate modification. The residue at position 24 (Tyr-24) is a Thyroxine; alternate. Tyr-24 bears the Triiodothyronine; alternate mark. 4 consecutive Thyroglobulin type-1 domains span residues 31–92, 93–160, 161–297, and 298–358; these read LRPC…PAAC, LSFC…PARC, PRSC…RFRC, and PTKC…PPSC. 8 cysteine pairs are disulfide-bonded: Cys-34–Cys-52, Cys-63–Cys-70, Cys-72–Cys-92, Cys-96–Cys-120, Cys-131–Cys-138, Cys-140–Cys-160, Cys-164–Cys-183, and Cys-194–Cys-235. At Tyr-108 the chain carries Iodotyrosine. A glycan (N-linked (GlcNAc...) (complex) asparagine; alternate) is linked at Asn-110. The N-linked (GlcNAc...) (hybrid) asparagine; alternate glycan is linked to Asn-110. An Iodotyrosine; alternate modification is found at Tyr-149. Diiodotyrosine; alternate is present on Tyr-149. Iodotyrosine occurs at positions 234 and 258. Disulfide bonds link Cys-301–Cys-319, Cys-330–Cys-336, Cys-338–Cys-358, Cys-364–Cys-619, Cys-408–Cys-607, Cys-630–Cys-635, Cys-637–Cys-657, Cys-661–Cys-686, and Cys-697–Cys-702. 2 N-linked (GlcNAc...) (complex) asparagine; alternate glycosylation sites follow: Asn-483 and Asn-495. N-linked (GlcNAc...) (hybrid) asparagine; alternate glycans are attached at residues Asn-483 and Asn-495. Thyroglobulin type-1 domains follow at residues 604–657, 658–725, 726–921, 922–1073, 1074–1145, and 1146–1210; these read SQGC…RPRC, PTEC…PKKC, PSPC…VPAC, PGSC…IPQC, PTSC…SAQC, and PSLC…QPAC. Tyr-703 bears the Iodotyrosine; alternate mark. Residue Tyr-703 is modified to Thyroxine; alternate. Tyr-703 carries the triiodothyronine; alternate modification. Tyr-703 carries the post-translational modification Diiodotyrosine; alternate. 16 cysteine pairs are disulfide-bonded: Cys-704/Cys-725, Cys-729/Cys-762, Cys-773/Cys-898, Cys-900/Cys-921, Cys-925/Cys-1031, Cys-1042/Cys-1049, Cys-1051/Cys-1073, Cys-1077/Cys-1108, Cys-1126/Cys-1145, Cys-1149/Cys-1169, Cys-1181/Cys-1188, Cys-1190/Cys-1210, Cys-1215/Cys-1264, Cys-1231/Cys-1245, Cys-1306/Cys-1356, and Cys-1331/Cys-1347. Residue Tyr-784 is modified to Iodotyrosine. Asn-853 carries an N-linked (GlcNAc...) (complex) asparagine; alternate glycan. An N-linked (GlcNAc...) (hybrid) asparagine; alternate glycan is attached at Asn-853. Tyr-866 carries the iodotyrosine; alternate modification. The residue at position 866 (Tyr-866) is a Diiodotyrosine; alternate. At Tyr-883 the chain carries Diiodotyrosine. Asn-947 carries N-linked (GlcNAc...) (complex) asparagine; alternate glycosylation. The N-linked (GlcNAc...) (hybrid) asparagine; alternate glycan is linked to Asn-947. Tyr-992 is subject to Iodotyrosine; alternate. Tyr-992 carries the diiodotyrosine; alternate modification. The N-linked (GlcNAc...) (complex) asparagine; alternate glycan is linked to Asn-1140. Residue Asn-1140 is glycosylated (N-linked (GlcNAc...) (hybrid) asparagine; alternate). Tyr-1310 carries the iodotyrosine modification. Tyr-1310 carries the post-translational modification Thyroxine. The N-linked (GlcNAc...) (high mannose) asparagine glycan is linked to Asn-1365. Cystine bridges form between Cys-1441–Cys-1461, Cys-1464–Cys-1475, Cys-1478–Cys-1492, Cys-1495–Cys-1512, Cys-1516–Cys-1525, Cys-1545–Cys-1567, Cys-1605–Cys-1629, Cys-1609–Cys-1615, Cys-1641–Cys-1664, Cys-1726–Cys-1751, Cys-1730–Cys-1736, Cys-1735–Cys-1836, and Cys-1762–Cys-1779. Type II repeat units follow at residues 1458-1471, 1472-1488, and 1489-1505; these read ALGC…SYFQ, DEQC…EQAG, and SLAC…VYAG. At Tyr-1469 the chain carries Iodotyrosine; alternate. Residue Tyr-1469 is modified to Diiodotyrosine; alternate. The Thyroglobulin type-1 11 domain occupies 1513-1567; the sequence is VTDCQKNEVGLQCDQDSQYRASQRDRTSGKAFCVDGEGRRLPWTEAEAPLVDAQC. The Type IIIA repeat unit spans residues 1605–1725; sequence CLADCALDEA…GASLAEVHLF (121 aa). A Type IIIB repeat occupies 1726-1893; the sequence is CLLACDHDSC…LFSLQQANLW (168 aa). Asn-1776 carries N-linked (GlcNAc...) (complex) asparagine; alternate glycosylation. The N-linked (GlcNAc...) (hybrid) asparagine; alternate glycan is linked to Asn-1776. Residues 1827–1842 are compositionally biased toward basic and acidic residues; sequence MGSRSESMGCRRDTEP. Residues 1827–1851 form a disordered region; it reads MGSRSESMGCRRDTEPRPASPSETD. A glycan (N-linked (GlcNAc...) (complex) asparagine; alternate) is linked at Asn-1870. Asn-1870 carries N-linked (GlcNAc...) (hybrid) asparagine; alternate glycosylation. 7 disulfide bridges follow: Cys-1894-Cys-1920, Cys-1898-Cys-1905, Cys-1929-Cys-1940, Cys-1997-Cys-2025, Cys-2001-Cys-2007, Cys-2006-Cys-2077, and Cys-2036-Cys-2049. Residues 1894-1996 form a Type IIIA repeat; it reads CLSRCAGEPS…DKSISSGFFE (103 aa). The Type IIIB repeat unit spans residues 1997–2130; sequence CERLCDMDPC…VGNFSAARDR (134 aa). The N-linked (GlcNAc...) (high mannose) asparagine glycan is linked to Asn-2014. N-linked (GlcNAc...) (high mannose) asparagine glycosylation is present at Asn-2123. 3 disulfides stabilise this stretch: Cys-2131–Cys-2155, Cys-2135–Cys-2141, and Cys-2164–Cys-2173. Residues 2131–2188 form a Type IIIA repeat; sequence CLWECSRHQDCLVTTLQTQPGAVRCMFYADTQSCTHSLQAQNCRLLLHEEATYIYRKP. Tyr-2185 is modified (iodotyrosine). Positions 2189–2769 are cholinesterase-like (ChEL); the sequence is NIPLPGFGTS…PELASKTYSK (581 aa). A glycan (N-linked (GlcNAc...) (complex) asparagine; alternate) is linked at Asn-2251. Asn-2251 is a glycosylation site (N-linked (GlcNAc...) (hybrid) asparagine; alternate). Residue Asn-2296 is glycosylated (N-linked (GlcNAc...) (high mannose) asparagine). Cys-2443 and Cys-2454 are disulfide-bonded. Thyroxine is present on Tyr-2541. An Iodotyrosine; alternate modification is found at Tyr-2574. Tyr-2574 is modified (thyroxine; alternate). Residue Tyr-2574 is modified to Triiodothyronine; alternate. Position 2574 is a diiodotyrosine; alternate (Tyr-2574). Tyr-2588 and Tyr-2618 each carry iodotyrosine. Cys-2592 and Cys-2716 are joined by a disulfide. A Diiodotyrosine modification is found at Tyr-2698. Residues 2730-2769 form a disordered region; it reads ADETKDGPSADSEEEDQPAGSGLTEDLLGLPELASKTYSK. Iodotyrosine; alternate is present on Tyr-2767. Tyr-2767 bears the Thyroxine; alternate mark. Tyr-2767 carries the post-translational modification Triiodothyronine; alternate. Tyr-2767 carries the post-translational modification Diiodotyrosine; alternate.

The protein belongs to the type-B carboxylesterase/lipase family. Monomer. Homodimer (via ChEL region); occurs in the endoplasmic reticulum and is required for export to the Golgi apparatus. Homooligomer; disulfide-linked; stored in this form in the thyroid follicle lumen. Post-translationally, iodinated on tyrosine residues by TPO. There are 4 pairs of iodinated tyrosines used for coupling: acceptor Tyr-24 is coupled to donor Tyr-149 or Tyr-234, acceptor Tyr-2574 is coupled to donor Tyr-2541, acceptor Tyr-2767 in monomer 1 is coupled to donor Tyr-2767 in monomer 2 and acceptor Tyr-1310 in monomer 1 is coupled to donor Tyr-108 in monomer 2. Sulfated tyrosines are desulfated during iodination. In terms of processing, undergoes sequential proteolysis by cathepsins to release thyroxine (T4) and triiodothyronine (T3) hormones. In the thyroid follicle lumen, cross-linked TG (storage form) is solubilized by limited proteolysis mediated by cathepsins CTSB and/or CTSL. Partially cleaved TG is further processed by CTSK/cathepsin K and/or CTSL resulting in the release of T4. Following endocytosis, further processing occurs leading to the release of T3 and more T4 hormones. As to expression, specifically expressed in the thyroid gland.

The protein resides in the secreted. In terms of biological role, acts as a substrate for the production of iodinated thyroid hormones thyroxine (T4) and triiodothyronine (T3). The synthesis of T3 and T4 involves iodination of selected tyrosine residues of TG/thyroglobulin followed by their oxidative coupling. Following TG re-internalization and lysosomal-mediated proteolysis, T3 and T4 are released from the polypeptide backbone leading to their secretion into the bloodstream. One dimer produces 7 thyroid hormone molecules. The chain is Thyroglobulin (TG) from Bos taurus (Bovine).